Reading from the N-terminus, the 408-residue chain is LL-diaminopimelate aminotransferase (408 aa).

Positions 15 and 42 each coordinate substrate. Pyridoxal 5'-phosphate is bound by residues tyrosine 72, 108 to 109 (SK), tyrosine 132, asparagine 187, tyrosine 218, and 246 to 248 (SFS). Positions 109, 132, and 187 each coordinate substrate. Residue lysine 249 is modified to N6-(pyridoxal phosphate)lysine. Positions 257 and 292 each coordinate pyridoxal 5'-phosphate. Substrate contacts are provided by asparagine 292 and arginine 388.

This sequence belongs to the class-I pyridoxal-phosphate-dependent aminotransferase family. LL-diaminopimelate aminotransferase subfamily. Homodimer. Requires pyridoxal 5'-phosphate as cofactor.

It catalyses the reaction (2S,6S)-2,6-diaminopimelate + 2-oxoglutarate = (S)-2,3,4,5-tetrahydrodipicolinate + L-glutamate + H2O + H(+). It participates in amino-acid biosynthesis; L-lysine biosynthesis via DAP pathway; LL-2,6-diaminopimelate from (S)-tetrahydrodipicolinate (aminotransferase route): step 1/1. Its function is as follows. Involved in the synthesis of meso-diaminopimelate (m-DAP or DL-DAP), required for both lysine and peptidoglycan biosynthesis. Catalyzes the direct conversion of tetrahydrodipicolinate to LL-diaminopimelate. The polypeptide is LL-diaminopimelate aminotransferase (Prochlorococcus marinus (strain MIT 9312)).